We begin with the raw amino-acid sequence, 455 residues long: Differentiation-associated protein 1 (455 aa).

The signal sequence occupies residues M1 to S21. Residues I349–S434 are disordered. Residues S351–S423 show a composition bias toward low complexity. S433 carries the GPI-like-anchor amidated serine lipid modification. A propeptide spans S434–F455 (removed in mature form).

The protein localises to the cell membrane. Plays a role in differentiation. The polypeptide is Differentiation-associated protein 1 (dia1) (Dictyostelium discoideum (Social amoeba)).